A 357-amino-acid chain; its full sequence is MKYDNLLDATSQYGPQDLLLGRDGLISTGYWAKTQANILTGTGLPVSNDEMKTYLNLPKNVEIPQDFQKLYDVYNEYKKLCDWWLEKLLSCVNKMANDIYNVGSTTSELINEALQPGLRAITTASNDQDRQDAIQDFHEVCLILMRELDENQQSMKDVQNLLNSFLQGGNNFIGVTQLNNSFEEVMTYLDSQYNDESEIHDLLNIFMQFKKLLGESLEEHEINEKVKFSSELGPLIGYIVSEMLEYSDVQMFKQRIDNFQNLNGVDAQVALVVKVLSLFHGINIDLHNVIYQAERSLEFIEQTEGNWHSIANQFYSLAQGFENEDINKLSTDLDNAAATWEAVANKAKEFVTNSYQG.

Belongs to the cry6A endotoxin family.

This Bacillus subtilis (strain 168) protein is SPbeta prophage-derived pesticidal crystal protein-like YokG (yokG).